Here is a 298-residue protein sequence, read N- to C-terminus: Probable endonuclease 4 (298 aa).

Residues His69, His111, Glu146, Asp180, His183, His215, Asp228, His230, and Glu260 each coordinate Zn(2+).

The protein belongs to the AP endonuclease 2 family. Requires Zn(2+) as cofactor.

It carries out the reaction Endonucleolytic cleavage to 5'-phosphooligonucleotide end-products.. In terms of biological role, endonuclease IV plays a role in DNA repair. It cleaves phosphodiester bonds at apurinic or apyrimidinic (AP) sites, generating a 3'-hydroxyl group and a 5'-terminal sugar phosphate. This Bacillus anthracis (strain A0248) protein is Probable endonuclease 4.